The primary structure comprises 387 residues: ATP-dependent Clp protease proteolytic subunit-related protein 1, chloroplastic (387 aa).

A chloroplast-targeting transit peptide spans 1 to 41 (MATALVSPLTSQLNHEAVCSKFVLPKSPFMSGSKLFSSNMP). The segment covering 355–365 (QDSSFEKRDYD) has biased composition (basic and acidic residues). A disordered region spans residues 355 to 387 (QDSSFEKRDYDGTLAQRAMRPGGGSPAAPAGLR).

It belongs to the peptidase S14 family. As to quaternary structure, component of the chloroplastic Clp protease core complex which consist of at least 16 proteins: CLPP4 (3 copies), CLPP5 (3 copies), CLPR4 (2 copies), ClpP1 (1 copy), CLPP6 (1 copy), CLPR2 (1 copy), CLPT1 (1 copy), CLPT2 (1 copy) and 3 copies of CLPP3 and/or CLPR1 and/or CLPR3. The core complex is organized in two heptameric rings, one containing CLPP3,4,5,6 in a 1:2:3:1 ratio and the other CLPP1 and CLPR1,2,3,4 in a 3:1:1:1:1 ratio.

It localises to the plastid. It is found in the chloroplast stroma. Its function is as follows. Required for chloroplast development and differentiation. In Arabidopsis thaliana (Mouse-ear cress), this protein is ATP-dependent Clp protease proteolytic subunit-related protein 1, chloroplastic.